The following is a 542-amino-acid chain: Propane 2-monooxygenase, hydroxylase component large subunit (542 aa).

Positions 97, 127, 130, 192, 226, and 229 each coordinate Fe cation.

The protein belongs to the TmoA/XamoA family. In terms of assembly, the propane 2-monooxygenase multicomponent enzyme system is composed of an electron transfer component and a monooxygenase component interacting with the effector protein MimD. The electron transfer component is composed of a reductase (MimB), and the monooxygenase component is formed by a large subunit (MimA) and a small subunit (MimC). Requires the presence of the chaperonin-like protein MimG to ensure a productive folding, resulting of a soluble MimA, which leads to the active form of MimABCD. Fe(2+) serves as cofactor.

The catalysed reaction is propane + NADH + O2 + H(+) = propan-2-ol + NAD(+) + H2O. It carries out the reaction acetone + NADH + O2 + H(+) = hydroxyacetone + NAD(+) + H2O. The enzyme catalyses butan-2-one + NADH + O2 + H(+) = 1-hydroxy-2-butanone + NAD(+) + H2O. It catalyses the reaction phenol + NADH + O2 + H(+) = hydroquinone + NAD(+) + H2O. Component of the propane 2-monooxygenase multicomponent enzyme system which is involved in the degradation of propane via the O2-dependent hydroxylation of propane. Also involved in the degradation of acetone via the O2-dependent hydroxylation of acetone. Also able to catalyze the oxidation of phenol, methylethylketone (2-butanone), 1-propanol and 2-propanol. The chain is Propane 2-monooxygenase, hydroxylase component large subunit from Mycolicibacterium smegmatis (strain ATCC 700084 / mc(2)155) (Mycobacterium smegmatis).